The following is a 552-amino-acid chain: Berberine bridge enzyme-like 6 (552 aa).

A signal peptide spans 1–16 (MKEAFVFLLCLTNKFP). An intrachain disulfide couples C56 to C119. 6 N-linked (GlcNAc...) asparagine glycosylation sites follow: N76, N161, N280, N364, N419, and N463. In terms of domain architecture, FAD-binding PCMH-type spans 93–270 (FSSPNFKKLL…LSWKINLVEV (178 aa)). Residues 134–196 (HDNEGFSYMS…QTLAFPAGVC (63 aa)) constitute a cross-link (6-(S-cysteinyl)-8alpha-(pros-histidyl)-FAD (His-Cys)).

The protein belongs to the oxygen-dependent FAD-linked oxidoreductase family. The cofactor is FAD. In terms of processing, the FAD cofactor is bound via a bicovalent 6-S-cysteinyl, 8alpha-N1-histidyl FAD linkage.

The protein localises to the secreted. The protein resides in the cell wall. In terms of biological role, probable flavin-dependent oxidoreductase. The chain is Berberine bridge enzyme-like 6 from Arabidopsis thaliana (Mouse-ear cress).